The primary structure comprises 88 residues: Small ribosomal subunit protein uS15 (88 aa).

The tract at residues 1–23 (MIASSVKAEVVKSNARSANDTGS) is disordered. Polar residues predominate over residues 14-23 (NARSANDTGS).

It belongs to the universal ribosomal protein uS15 family. Part of the 30S ribosomal subunit. Forms a bridge to the 50S subunit in the 70S ribosome, contacting the 23S rRNA.

In terms of biological role, one of the primary rRNA binding proteins, it binds directly to 16S rRNA where it helps nucleate assembly of the platform of the 30S subunit by binding and bridging several RNA helices of the 16S rRNA. Functionally, forms an intersubunit bridge (bridge B4) with the 23S rRNA of the 50S subunit in the ribosome. The sequence is that of Small ribosomal subunit protein uS15 from Delftia acidovorans (strain DSM 14801 / SPH-1).